We begin with the raw amino-acid sequence, 147 residues long: Large ribosomal subunit protein uL13 (147 aa).

This sequence belongs to the universal ribosomal protein uL13 family. As to quaternary structure, part of the 50S ribosomal subunit.

In terms of biological role, this protein is one of the early assembly proteins of the 50S ribosomal subunit, although it is not seen to bind rRNA by itself. It is important during the early stages of 50S assembly. This is Large ribosomal subunit protein uL13 from Lactobacillus delbrueckii subsp. bulgaricus (strain ATCC 11842 / DSM 20081 / BCRC 10696 / JCM 1002 / NBRC 13953 / NCIMB 11778 / NCTC 12712 / WDCM 00102 / Lb 14).